Here is a 382-residue protein sequence, read N- to C-terminus: 4-hydroxy-3-methylbut-2-en-1-yl diphosphate synthase (flavodoxin) (382 aa).

[4Fe-4S] cluster is bound by residues cysteine 273, cysteine 276, cysteine 308, and glutamate 315.

Belongs to the IspG family. The cofactor is [4Fe-4S] cluster.

The catalysed reaction is (2E)-4-hydroxy-3-methylbut-2-enyl diphosphate + oxidized [flavodoxin] + H2O + 2 H(+) = 2-C-methyl-D-erythritol 2,4-cyclic diphosphate + reduced [flavodoxin]. It functions in the pathway isoprenoid biosynthesis; isopentenyl diphosphate biosynthesis via DXP pathway; isopentenyl diphosphate from 1-deoxy-D-xylulose 5-phosphate: step 5/6. Functionally, converts 2C-methyl-D-erythritol 2,4-cyclodiphosphate (ME-2,4cPP) into 1-hydroxy-2-methyl-2-(E)-butenyl 4-diphosphate. This Gluconacetobacter diazotrophicus (strain ATCC 49037 / DSM 5601 / CCUG 37298 / CIP 103539 / LMG 7603 / PAl5) protein is 4-hydroxy-3-methylbut-2-en-1-yl diphosphate synthase (flavodoxin).